The following is a 135-amino-acid chain: NADPH-dependent 7-cyano-7-deazaguanine reductase (135 aa).

The active-site Thioimide intermediate is the Cys-48. Asp-55 functions as the Proton donor in the catalytic mechanism. Substrate-binding positions include 70–72 (IEL) and 89–90 (HE).

The protein belongs to the GTP cyclohydrolase I family. QueF type 1 subfamily.

It localises to the cytoplasm. The catalysed reaction is 7-aminomethyl-7-carbaguanine + 2 NADP(+) = 7-cyano-7-deazaguanine + 2 NADPH + 3 H(+). It functions in the pathway tRNA modification; tRNA-queuosine biosynthesis. Catalyzes the NADPH-dependent reduction of 7-cyano-7-deazaguanine (preQ0) to 7-aminomethyl-7-deazaguanine (preQ1). The sequence is that of NADPH-dependent 7-cyano-7-deazaguanine reductase from Prochlorococcus marinus (strain MIT 9313).